The chain runs to 913 residues: Sterol uptake control protein 2 (913 aa).

The zn(2)-C6 fungal-type DNA-binding region spans 50-80; sequence GCDNCKRRRVKCDEGKPACRKCTNMKLECQY. Disordered regions lie at residues 103-173 and 216-258; these read GSVE…SMGL and GNMG…LAGS. The residue at position 122 (Thr-122) is a Phosphothreonine. Residues 150–164 are compositionally biased toward basic and acidic residues; that stretch reads SESEEKSSAPIEDKN. Over residues 222–241 the composition is skewed to low complexity; the sequence is QLQQQQQVQQQSQPQTQAQQ. Positions 303-346 form a coiled coil; that stretch reads QQHQQVQLQQYQQLRQEQHQQVQQQQQEQLQQYQQHFLQQQQQV. Disordered regions lie at residues 347–385 and 453–489; these read LLQQ…TLNS and MQEH…GSAS. Over residues 374-385 the composition is skewed to polar residues; the sequence is LQSQTSETTLNS. Residues 440–472 adopt a coiled-coil conformation; sequence ATKASNAEEALANMQEHHERAAASVKENDGQLS. The span at 454 to 468 shows a compositional bias: basic and acidic residues; sequence QEHHERAAASVKEND. The segment covering 469–487 has biased composition (polar residues); it reads GQLSDTKSPAPSNNAQGGS. Phosphoserine is present on Ser-519. Residues 552–562 show a composition bias toward polar residues; the sequence is EPTISLQTSQT. The segment at 552-571 is disordered; sequence EPTISLQTSQTENEDDASRQ.

It localises to the nucleus. Transcription factor that is involved in activation of anaerobic genes such as DAN/TIR cell wall mannoprotein genes and YML083c. Appears to bind to anaerobic response elements (AR1) with the consensus sequence 5'-TCGTTYAG-3' present in the promoter regions of DAN/TIR genes. Involved in sterol uptake and regulation of the sterol biosynthesis. Binds to sterol regulatory elements (SRE) with the consensus sequence 5'-TCGTATA-3' present in ERG2 and ERG3 promoters. May be involved in down-regulation of CWP2 during anaerobic adaptation. This Saccharomyces cerevisiae (strain ATCC 204508 / S288c) (Baker's yeast) protein is Sterol uptake control protein 2 (UPC2).